We begin with the raw amino-acid sequence, 237 residues long: Purine nucleoside phosphorylase DeoD-type (237 aa).

His-4 provides a ligand contact to a purine D-ribonucleoside. Phosphate contacts are provided by residues Gly-20, Arg-24, Arg-43, and 87 to 90; that span reads RVGS. Residues 179–181 and 203–204 contribute to the a purine D-ribonucleoside site; these read EME and SD. Asp-204 (proton donor) is an active-site residue.

Belongs to the PNP/UDP phosphorylase family. Homohexamer; trimer of homodimers.

The enzyme catalyses a purine D-ribonucleoside + phosphate = a purine nucleobase + alpha-D-ribose 1-phosphate. The catalysed reaction is a purine 2'-deoxy-D-ribonucleoside + phosphate = a purine nucleobase + 2-deoxy-alpha-D-ribose 1-phosphate. Functionally, catalyzes the reversible phosphorolytic breakdown of the N-glycosidic bond in the beta-(deoxy)ribonucleoside molecules, with the formation of the corresponding free purine bases and pentose-1-phosphate. The protein is Purine nucleoside phosphorylase DeoD-type of Dichelobacter nodosus (strain VCS1703A).